Reading from the N-terminus, the 1082-residue chain is Error-prone DNA polymerase (1082 aa).

This sequence belongs to the DNA polymerase type-C family. DnaE2 subfamily.

The protein resides in the cytoplasm. It catalyses the reaction DNA(n) + a 2'-deoxyribonucleoside 5'-triphosphate = DNA(n+1) + diphosphate. DNA polymerase involved in damage-induced mutagenesis and translesion synthesis (TLS). It is not the major replicative DNA polymerase. This chain is Error-prone DNA polymerase, found in Xanthomonas campestris pv. campestris (strain B100).